The sequence spans 462 residues: Glutamate--tRNA ligase (462 aa).

The short motif at 11-21 is the 'HIGH' region element; that stretch reads PSPTGFIHLGN. A compositionally biased stretch (basic and acidic residues) spans 120 to 131; that stretch reads KPRYDGTWRPEP. Residues 120–140 are disordered; the sequence is KPRYDGTWRPEPGKTLPPIPA. The short motif at 243 to 247 is the 'KMSKS' region element; that stretch reads KMSKR. Lys-246 provides a ligand contact to ATP.

The protein belongs to the class-I aminoacyl-tRNA synthetase family. Glutamate--tRNA ligase type 1 subfamily. In terms of assembly, monomer.

The protein resides in the cytoplasm. The enzyme catalyses tRNA(Glu) + L-glutamate + ATP = L-glutamyl-tRNA(Glu) + AMP + diphosphate. In terms of biological role, catalyzes the attachment of glutamate to tRNA(Glu) in a two-step reaction: glutamate is first activated by ATP to form Glu-AMP and then transferred to the acceptor end of tRNA(Glu). The chain is Glutamate--tRNA ligase from Polaromonas sp. (strain JS666 / ATCC BAA-500).